A 54-amino-acid polypeptide reads, in one-letter code: Sec-independent protein translocase protein TatA (54 aa).

A helical transmembrane segment spans residues 1 to 21; that stretch reads MGMSFSHLLIVLLIIFVLFGA.

This sequence belongs to the TatA/E family. In terms of assembly, the Tat system comprises two distinct complexes: a TatABC complex, containing multiple copies of TatA, TatB and TatC subunits, and a separate TatA complex, containing only TatA subunits. Substrates initially bind to the TatABC complex, which probably triggers association of the separate TatA complex to form the active translocon.

The protein localises to the cell inner membrane. Its function is as follows. Part of the twin-arginine translocation (Tat) system that transports large folded proteins containing a characteristic twin-arginine motif in their signal peptide across membranes. TatA could form the protein-conducting channel of the Tat system. The chain is Sec-independent protein translocase protein TatA from Rickettsia prowazekii (strain Madrid E).